The chain runs to 379 residues: Citrate utilization protein B (379 aa).

8 residues coordinate [4Fe-4S] cluster: Cys28, Cys31, Cys34, Cys38, Cys62, Cys65, Cys68, and Cys72.

This chain is Citrate utilization protein B (citB), found in Escherichia coli.